We begin with the raw amino-acid sequence, 101 residues long: MAKKSMVAREKKREALVAKYAAKRAELKEIINNKELEMEERFRASLKLAKLPRNSSAVRLHNRCQLTGRPHAYYRKLKISRIALRDLGSSGQIPGMVKSSW.

This sequence belongs to the universal ribosomal protein uS14 family. As to quaternary structure, part of the 30S ribosomal subunit. Contacts proteins S3 and S10.

Its function is as follows. Binds 16S rRNA, required for the assembly of 30S particles and may also be responsible for determining the conformation of the 16S rRNA at the A site. The protein is Small ribosomal subunit protein uS14 of Roseobacter denitrificans (strain ATCC 33942 / OCh 114) (Erythrobacter sp. (strain OCh 114)).